Here is a 273-residue protein sequence, read N- to C-terminus: 2,3,4,5-tetrahydropyridine-2,6-dicarboxylate N-succinyltransferase (273 aa).

2 residues coordinate substrate: Arg-104 and Asp-141.

The protein belongs to the transferase hexapeptide repeat family. In terms of assembly, homotrimer.

The protein localises to the cytoplasm. It catalyses the reaction (S)-2,3,4,5-tetrahydrodipicolinate + succinyl-CoA + H2O = (S)-2-succinylamino-6-oxoheptanedioate + CoA. Its pathway is amino-acid biosynthesis; L-lysine biosynthesis via DAP pathway; LL-2,6-diaminopimelate from (S)-tetrahydrodipicolinate (succinylase route): step 1/3. This Aromatoleum aromaticum (strain DSM 19018 / LMG 30748 / EbN1) (Azoarcus sp. (strain EbN1)) protein is 2,3,4,5-tetrahydropyridine-2,6-dicarboxylate N-succinyltransferase.